The following is a 133-amino-acid chain: Major seminal plasma glycoprotein PSP-I (133 aa).

The signal sequence occupies residues 1 to 24; sequence MKLGSAIPWALLFSTATLISTGWG. Cys-30 and Cys-51 are oxidised to a cystine. In terms of domain architecture, CUB spans 30–130; it reads CGGRLTDDYG…SPYEIIFLRD (101 aa). N-linked (GlcNAc...) (complex) asparagine glycosylation occurs at Asn-71. An intrachain disulfide couples Cys-74 to Cys-95.

In terms of assembly, monomer or heterodimer with PSP-II (depending on the type of glycosylation of PSP-I). Seminal plasma or sperm.

It is found in the secreted. Its function is as follows. Not yet identified, major porcine seminal plasma protein. Can bind soybean trypsin inhibitor after deglycosylation. This Sus scrofa (Pig) protein is Major seminal plasma glycoprotein PSP-I.